The sequence spans 20 residues: Peptidase T (20 aa).

The protein belongs to the peptidase M20B family. Requires Zn(2+) as cofactor. Co(2+) serves as cofactor.

The protein resides in the cell envelope. It catalyses the reaction Release of the N-terminal residue from a tripeptide.. With respect to regulation, inhibited by the chelating agents EDTA and 1,10-phenanthroline, by bestatin and amastatin, p-hydroxymercuribenzoate and some divalent cations at high concentration. Functionally, cleaves a wide range of dipeptides and tripeptides, but does not display activity against larger peptides. May have a role in the survival of F.nucleatum in the subgingival environment of the mouth. This is Peptidase T (pepT) from Fusobacterium nucleatum subsp. polymorphum (Fusobacterium polymorphum).